A 256-amino-acid chain; its full sequence is Type III pantothenate kinase (256 aa).

6 to 13 (DIGNSSIV) contributes to the ATP binding site. Substrate-binding positions include tyrosine 101 and 108 to 111 (GADR). Aspartate 110 (proton acceptor) is an active-site residue. Aspartate 130 is a binding site for K(+). ATP is bound at residue threonine 133. Threonine 185 is a binding site for substrate.

The protein belongs to the type III pantothenate kinase family. Homodimer. It depends on NH4(+) as a cofactor. Requires K(+) as cofactor.

The protein localises to the cytoplasm. The catalysed reaction is (R)-pantothenate + ATP = (R)-4'-phosphopantothenate + ADP + H(+). Its pathway is cofactor biosynthesis; coenzyme A biosynthesis; CoA from (R)-pantothenate: step 1/5. In terms of biological role, catalyzes the phosphorylation of pantothenate (Pan), the first step in CoA biosynthesis. The chain is Type III pantothenate kinase from Shouchella clausii (strain KSM-K16) (Alkalihalobacillus clausii).